Here is a 383-residue protein sequence, read N- to C-terminus: MIVSFGDATTRTSEVQLVRCTQGLNLWKLHQVHAVYKRVVHDTLGADEGNALLDQILADTNLYPPWMCVLLYAFCSAMVTPYAFGGDWVNLAISFFMGLCVGSLQFILSQKSYMYSNVFEISASIVVSFCGRAFGSIPRSHICFGAVTQGSLALILPGYIILCGALELQSRSLVAGAVRMFYAIIYSLFLGFGITLGSALFGWMYHNATNEISCPQLISPWFRFLFVPAFTISISLLNQAHISQLPVMVFISCTGYVVTYWAGKHFANSTEFTAALAAFVIGVLGNLYSRIWKGLAVSAMLPAIFVQVPSGIASQNSLLSGLQSANTIVNANETITTSTSDPSSSMSFGMTMIQVCVGISVGLFASSLFVYPFGKKKTGLFSL.

At 1 to 65 (MIVSFGDATT…ILADTNLYPP (65 aa)) the chain is on the cytoplasmic side. A helical membrane pass occupies residues 66–86 (WMCVLLYAFCSAMVTPYAFGG). Asp87 is a topological domain (extracellular). The chain crosses the membrane as a helical span at residues 88-108 (WVNLAISFFMGLCVGSLQFIL). Topologically, residues 109 to 117 (SQKSYMYSN) are cytoplasmic. Residues 118–138 (VFEISASIVVSFCGRAFGSIP) traverse the membrane as a helical segment. Residues 139–141 (RSH) lie on the Extracellular side of the membrane. The chain crosses the membrane as a helical span at residues 142–162 (ICFGAVTQGSLALILPGYIIL). Residues 163–180 (CGALELQSRSLVAGAVRM) are Cytoplasmic-facing. The helical transmembrane segment at 181 to 201 (FYAIIYSLFLGFGITLGSALF) threads the bilayer. The Extracellular portion of the chain corresponds to 202-216 (GWMYHNATNEISCPQ). A helical membrane pass occupies residues 217–237 (LISPWFRFLFVPAFTISISLL). The Cytoplasmic segment spans residues 238 to 241 (NQAH). The chain crosses the membrane as a helical span at residues 242–262 (ISQLPVMVFISCTGYVVTYWA). The Extracellular segment spans residues 263–271 (GKHFANSTE). A helical transmembrane segment spans residues 272–292 (FTAALAAFVIGVLGNLYSRIW). Position 293 (Lys293) is a topological domain, cytoplasmic. Residues 294-314 (GLAVSAMLPAIFVQVPSGIAS) form a helical membrane-spanning segment. At 315-352 (QNSLLSGLQSANTIVNANETITTSTSDPSSSMSFGMTM) the chain is on the extracellular side. The helical transmembrane segment at 353-373 (IQVCVGISVGLFASSLFVYPF) threads the bilayer. At 374-383 (GKKKTGLFSL) the chain is on the cytoplasmic side.

This sequence belongs to the ThrE exporter (TC 2.A.79) family.

It localises to the membrane. The polypeptide is Pheromone-regulated membrane protein 10 (PRM10) (Saccharomyces cerevisiae (strain ATCC 204508 / S288c) (Baker's yeast)).